A 448-amino-acid polypeptide reads, in one-letter code: Argininosuccinate synthase (448 aa).

Residues Ala17 to Ser25 and Ala43 contribute to the ATP site. Tyr99 is an L-citrulline binding site. ATP contacts are provided by Gly129 and Thr131. Thr131, Asn135, and Asp136 together coordinate L-aspartate. Asn135 is a binding site for L-citrulline. Asp136 lines the ATP pocket. L-citrulline-binding residues include Arg139 and Ser192. Asp194 is an ATP binding site. Positions 201, 203, and 280 each coordinate L-citrulline.

This sequence belongs to the argininosuccinate synthase family. Type 2 subfamily. As to quaternary structure, homotetramer.

The protein localises to the cytoplasm. It catalyses the reaction L-citrulline + L-aspartate + ATP = 2-(N(omega)-L-arginino)succinate + AMP + diphosphate + H(+). It participates in amino-acid biosynthesis; L-arginine biosynthesis; L-arginine from L-ornithine and carbamoyl phosphate: step 2/3. This chain is Argininosuccinate synthase, found in Bradyrhizobium sp. (strain ORS 278).